Reading from the N-terminus, the 199-residue chain is Phosphoheptose isomerase (199 aa).

In terms of domain architecture, SIS spans 36-198 (MSQCLLNEHK…DRKLIPSSED (163 aa)). 51–53 (NGG) contacts substrate. Positions 60 and 64 each coordinate Zn(2+). Substrate is bound by residues glutamate 64, 93 to 94 (ND), 119 to 121 (STS), serine 124, and glutamine 174. Positions 174 and 182 each coordinate Zn(2+).

Belongs to the SIS family. GmhA subfamily. In terms of assembly, homotetramer. The cofactor is Zn(2+).

It is found in the cytoplasm. The enzyme catalyses 2 D-sedoheptulose 7-phosphate = D-glycero-alpha-D-manno-heptose 7-phosphate + D-glycero-beta-D-manno-heptose 7-phosphate. The protein operates within carbohydrate biosynthesis; D-glycero-D-manno-heptose 7-phosphate biosynthesis; D-glycero-alpha-D-manno-heptose 7-phosphate and D-glycero-beta-D-manno-heptose 7-phosphate from sedoheptulose 7-phosphate: step 1/1. Functionally, catalyzes the isomerization of sedoheptulose 7-phosphate in D-glycero-D-manno-heptose 7-phosphate. The protein is Phosphoheptose isomerase of Coxiella burnetii (strain RSA 331 / Henzerling II).